Consider the following 147-residue polypeptide: Phosphoribosyl-AMP cyclohydrolase (147 aa).

Mg(2+) is bound at residue aspartate 91. Residue cysteine 92 coordinates Zn(2+). 2 residues coordinate Mg(2+): aspartate 93 and aspartate 95. Zn(2+)-binding residues include cysteine 109 and cysteine 116.

The protein belongs to the PRA-CH family. Homodimer. It depends on Mg(2+) as a cofactor. The cofactor is Zn(2+).

It localises to the cytoplasm. It catalyses the reaction 1-(5-phospho-beta-D-ribosyl)-5'-AMP + H2O = 1-(5-phospho-beta-D-ribosyl)-5-[(5-phospho-beta-D-ribosylamino)methylideneamino]imidazole-4-carboxamide. Its pathway is amino-acid biosynthesis; L-histidine biosynthesis; L-histidine from 5-phospho-alpha-D-ribose 1-diphosphate: step 3/9. In terms of biological role, catalyzes the hydrolysis of the adenine ring of phosphoribosyl-AMP. The chain is Phosphoribosyl-AMP cyclohydrolase from Rhodopseudomonas palustris (strain BisB18).